Consider the following 471-residue polypeptide: Glutamate--tRNA ligase (471 aa).

The short motif at 9–19 is the 'HIGH' region element; the sequence is PSPTGYLHVGG. 4 residues coordinate Zn(2+): Cys98, Cys100, Cys125, and His127. Positions 237 to 241 match the 'KMSKS' region motif; sequence KLSKR. Lys240 contributes to the ATP binding site.

This sequence belongs to the class-I aminoacyl-tRNA synthetase family. Glutamate--tRNA ligase type 1 subfamily. Monomer. Zn(2+) serves as cofactor.

It localises to the cytoplasm. It catalyses the reaction tRNA(Glu) + L-glutamate + ATP = L-glutamyl-tRNA(Glu) + AMP + diphosphate. Its function is as follows. Catalyzes the attachment of glutamate to tRNA(Glu) in a two-step reaction: glutamate is first activated by ATP to form Glu-AMP and then transferred to the acceptor end of tRNA(Glu). The protein is Glutamate--tRNA ligase of Escherichia coli O1:K1 / APEC.